The primary structure comprises 234 residues: Segregation and condensation protein A (234 aa).

This sequence belongs to the ScpA family. Component of a cohesin-like complex composed of ScpA, ScpB and the Smc homodimer, in which ScpA and ScpB bind to the head domain of Smc. The presence of the three proteins is required for the association of the complex with DNA.

It localises to the cytoplasm. Participates in chromosomal partition during cell division. May act via the formation of a condensin-like complex containing Smc and ScpB that pull DNA away from mid-cell into both cell halves. This is Segregation and condensation protein A from Streptococcus pyogenes serotype M6 (strain ATCC BAA-946 / MGAS10394).